The sequence spans 557 residues: Neurofilament light polypeptide (557 aa).

At Ser-2 the chain carries N-acetylserine. The tract at residues 2–89 (SSYSYDPYYT…KIVRTQEKAQ (88 aa)) is head. The region spanning 86-396 (EKAQLQDLND…KLLEGEETRL (311 aa)) is the IF rod domain. A coil 1A region spans residues 90 to 121 (LQDLNDRFANFIERVHELEQRNKVLEAELLLL). A linker 1 region spans residues 122–134 (RQKHNEPSRLRDL). Residues 135-230 (YEQEVRELRL…KVHEEELAQL (96 aa)) are coil 1B. Residues 231–248 (QSQVQYAQISLEVEVAKP) form a linker 12 region. The segment at 249–267 (DLSSALRDIRAQYEKLAAK) is coil 2A. The tract at residues 268–276 (NMQSAEDWF) is linker 2. Positions 277–392 (KSRFTVLTQS…AAYRKLLEGE (116 aa)) are coil 2B. The tail, subdomain A stretch occupies residues 393 to 437 (ETRLSFSGVGAITSGYTQSAPVFGRSAYSLQSSSYMTSRAFPTYY). The segment at 393–557 (ETRLSFSGVG…KKKKKKKKKK (165 aa)) is tail. Residues 438 to 557 (SSHVQEEQLD…KKKKKKKKKK (120 aa)) are tail, subdomain B (acidic). Residues 452 to 557 (IESSRAEEAK…KKKKKKKKKK (106 aa)) form a disordered region. A compositionally biased stretch (basic and acidic residues) spans 453 to 464 (ESSRAEEAKAEA). Residues 465–538 (PEEEEEEAGE…GEGEEEEEGK (74 aa)) show a composition bias toward acidic residues. The segment covering 539–548 (GEEPAEEESK) has biased composition (basic and acidic residues).

It belongs to the intermediate filament family. As to quaternary structure, forms homodimers (in vitro).

It localises to the cell projection. It is found in the axon. Its subcellular location is the cytoplasm. The protein localises to the cytoskeleton. Functionally, neurofilaments usually contain three intermediate filament proteins: NEFL, NEFM, and NEFH which are involved in the maintenance of neuronal caliber. May additionally cooperate with other neuronal intermediate filament proteins to form neuronal filamentous networks. The protein is Neurofilament light polypeptide (nefl) of Xenopus tropicalis (Western clawed frog).